The following is a 166-amino-acid chain: Probable protein tyrosine phosphatase type IVA A (166 aa).

The 155-residue stretch at 10-164 (NPASLVESST…YKSKKKSSCR (155 aa)) folds into the Tyrosine-protein phosphatase domain. C52 and C107 are joined by a disulfide. D75 acts as the Proton donor in catalysis. Residue C107 is the Phosphocysteine intermediate of the active site. 108–113 (VAGLGR) is a phosphate binding site. R113 is a substrate binding site. C163 bears the Cysteine methyl ester mark. Residue C163 is the site of S-farnesyl cysteine attachment. Positions 164 to 166 (RIM) are cleaved as a propeptide — removed in mature form.

Belongs to the protein-tyrosine phosphatase family.

The protein resides in the membrane. The catalysed reaction is O-phospho-L-tyrosyl-[protein] + H2O = L-tyrosyl-[protein] + phosphate. The polypeptide is Probable protein tyrosine phosphatase type IVA A (Dictyostelium discoideum (Social amoeba)).